A 193-amino-acid polypeptide reads, in one-letter code: Holliday junction branch migration complex subunit RuvA (193 aa).

Positions 1–64 (MIGRIAGTLL…EDAHLLFGFA (64 aa)) are domain I. Residues 65-144 (TATERNTFRE…DLGHAPGATP (80 aa)) are domain II. Positions 145–151 (LADSAVD) are flexible linker. Positions 151 to 193 (DILNALLALGYSEKEAAQAIKQVPAGTGVSDGIKLALKALSKG) are domain III.

This sequence belongs to the RuvA family. As to quaternary structure, homotetramer. Forms an RuvA(8)-RuvB(12)-Holliday junction (HJ) complex. HJ DNA is sandwiched between 2 RuvA tetramers; dsDNA enters through RuvA and exits via RuvB. An RuvB hexamer assembles on each DNA strand where it exits the tetramer. Each RuvB hexamer is contacted by two RuvA subunits (via domain III) on 2 adjacent RuvB subunits; this complex drives branch migration. In the full resolvosome a probable DNA-RuvA(4)-RuvB(12)-RuvC(2) complex forms which resolves the HJ.

It is found in the cytoplasm. Its function is as follows. The RuvA-RuvB-RuvC complex processes Holliday junction (HJ) DNA during genetic recombination and DNA repair, while the RuvA-RuvB complex plays an important role in the rescue of blocked DNA replication forks via replication fork reversal (RFR). RuvA specifically binds to HJ cruciform DNA, conferring on it an open structure. The RuvB hexamer acts as an ATP-dependent pump, pulling dsDNA into and through the RuvAB complex. HJ branch migration allows RuvC to scan DNA until it finds its consensus sequence, where it cleaves and resolves the cruciform DNA. This is Holliday junction branch migration complex subunit RuvA from Cupriavidus metallidurans (strain ATCC 43123 / DSM 2839 / NBRC 102507 / CH34) (Ralstonia metallidurans).